The following is a 412-amino-acid chain: Glutamate-pyruvate aminotransferase AlaC (412 aa).

Lys-244 bears the N6-(pyridoxal phosphate)lysine mark.

The protein belongs to the class-I pyridoxal-phosphate-dependent aminotransferase family. As to quaternary structure, homodimer. Pyridoxal 5'-phosphate is required as a cofactor.

Its subcellular location is the cytoplasm. It catalyses the reaction L-alanine + 2-oxoglutarate = pyruvate + L-glutamate. It participates in amino-acid biosynthesis; L-alanine biosynthesis. In terms of biological role, involved in the biosynthesis of alanine. Catalyzes the transamination of pyruvate by glutamate, leading to the formation of L-alanine and 2-oxoglutarate. Is also able to catalyze the reverse reaction. This is Glutamate-pyruvate aminotransferase AlaC from Escherichia coli (strain K12).